Consider the following 411-residue polypeptide: Lissencephaly-1 homolog (411 aa).

Residues 7–39 enclose the LisH domain; the sequence is QREELNKAIADYLASNGFMEALESFKKETDMPG. A coiled-coil region spans residues 54 to 80; the sequence is TSVIRLQKKVMDLEGRLAEAEKEYISG. A compositionally biased stretch (basic and acidic residues) spans 77–89; the sequence is YISGTPSREKRSP. Residues 77-96 form a disordered region; sequence YISGTPSREKRSPTEWIPRP. WD repeat units lie at residues 104–145, 146–187, 188–227, 230–269, 272–334, 337–376, and 379–411; these read GHRA…RTIK, GHTD…RTMH, GHDH…CVRT, GHRD…CKLE, EHDH…ALFT, GHDN…CCKT, and AHSH…WECR.

This sequence belongs to the WD repeat LIS1/nudF family.

It localises to the cytoplasm. The protein resides in the cytoskeleton. It is found in the microtubule organizing center. The protein localises to the centrosome. Functionally, positively regulates the activity of the minus-end directed microtubule motor protein dynein. May enhance dynein-mediated microtubule sliding by targeting dynein to the microtubule plus end. Required for several dynein- and microtubule-dependent processes. The chain is Lissencephaly-1 homolog from Ixodes scapularis (Black-legged tick).